The sequence spans 529 residues: Beta-hexosaminidase subunit alpha (529 aa).

An N-terminal signal peptide occupies residues 1–22; the sequence is MASSRLWFSLLLAAALAGRATA. Residues 23-88 constitute a propeptide that is removed on maturation; that stretch reads LWPWPQNIQT…PRPYLTGKRH (66 aa). A disulfide bridge connects residues cysteine 58 and cysteine 104. N-linked (GlcNAc...) asparagine glycans are attached at residues asparagine 115, asparagine 157, and asparagine 295. A disulfide bond links cysteine 277 and cysteine 328. Residue glutamate 323 is the Proton donor of the active site. The critical for hydrolysis GM2 gangliosides stretch occupies residues 423–424; sequence NR. Cysteine 505 and cysteine 522 are oxidised to a cystine.

Belongs to the glycosyl hydrolase 20 family. In terms of assembly, there are 3 beta-hexosaminidase isozymes: isozyme A (hexosaminidase A) is a heterodimer composed of one subunit alpha and one subunit beta (chain A and B); isozyme B (hexosaminidase B) is a homodimer of two beta subunits (two chains A and B); isozyme S (hexosaminidase S) is a homodimer of two alpha subunits. The composition of the dimer (isozyme A versus isozyme S) has a significant effect on the substrate specificity of the alpha subunit active site.

It is found in the lysosome. The enzyme catalyses Hydrolysis of terminal non-reducing N-acetyl-D-hexosamine residues in N-acetyl-beta-D-hexosaminides.. It carries out the reaction N-acetyl-beta-D-galactosaminyl-(1-&gt;4)-beta-D-3-sulfogalactosyl-(1-&gt;4)-beta-D-glucosyl-(1&lt;-&gt;1')-ceramide + H2O = a beta-D-3-sulfogalactosyl-(1-&gt;4)-beta-D-glucosyl-(1&lt;-&gt;1')-ceramide + N-acetyl-beta-D-galactosamine. It catalyses the reaction a ganglioside GM2 (d18:1(4E)) + H2O = a ganglioside GM3 (d18:1(4E)) + N-acetyl-beta-D-galactosamine. The catalysed reaction is a ganglioside GM2 + H2O = a ganglioside GM3 + N-acetyl-beta-D-galactosamine. The enzyme catalyses beta-D-GalNAc-(1-&gt;4)-alpha-L-IdoA-(1-&gt;3)-beta-D-GalNAc-4-sulfate-(1-&gt;4)-alpha-L-IdoA-(1-&gt;3)-D-GalNAc-4-sulfate + H2O = alpha-L-IdoA-(1-&gt;3)-beta-D-GalNAc-4-sulfate-(1-&gt;4)-alpha-L-IdoA-(1-&gt;3)-D-GalNAc-4-sulfate + N-acetyl-D-galactosamine. It carries out the reaction N-acetyl-beta-D-6-sulfogalactosaminyl-(1-&gt;4)-alpha-L-iduronyl-(1-&gt;3)-N-acetyl-D-6-sulfogalactosamine + H2O = alpha-L-iduronyl-(1-&gt;3)-N-acetyl-D-6-sulfogalactosamine + N-acetyl-D-6-sulfogalactosamine. With respect to regulation, addition of GM2A stimulates the hydrolysis of sulfated glycosphingolipid SM2 and the ganglioside GM2. In terms of biological role, hydrolyzes the non-reducing end N-acetyl-D-hexosamine and/or sulfated N-acetyl-D-hexosamine of glycoconjugates, such as the oligosaccharide moieties from proteins and neutral glycolipids, or from certain mucopolysaccharides. The isozyme S is as active as the isozyme A on the anionic bis-sulfated glycans, the chondroitin-6-sulfate trisaccharide (C6S-3), and the dermatan sulfate pentasaccharide, and the sulfated glycosphingolipid SM2. The isozyme B does not hydrolyze each of these substrates, however hydrolyzes efficiently neutral oligosaccharide. Only the isozyme A is responsible for the degradation of GM2 gangliosides in the presence of GM2A. This chain is Beta-hexosaminidase subunit alpha, found in Pongo abelii (Sumatran orangutan).